The chain runs to 141 residues: Hemoglobin subunit alpha (141 aa).

Residues 1 to 141 (VLSDEDKTNV…VSTVLTSKYR (141 aa)) enclose the Globin domain. S3 is modified (phosphoserine). At K7 the chain carries N6-succinyllysine. The residue at position 8 (T8) is a Phosphothreonine. K11 is modified (N6-succinyllysine). K16 is modified (N6-acetyllysine; alternate). Residue K16 is modified to N6-succinyllysine; alternate. Y24 carries the post-translational modification Phosphotyrosine. At S35 the chain carries Phosphoserine. K40 carries the N6-succinyllysine modification. S49 carries the post-translational modification Phosphoserine. H58 is an O2 binding site. H87 provides a ligand contact to heme b. Phosphoserine is present on S102. Phosphothreonine is present on T108. 2 positions are modified to phosphoserine: S124 and S131. A phosphothreonine mark is found at T134 and T137. S138 is subject to Phosphoserine.

The protein belongs to the globin family. Heterotetramer of two alpha chains and two beta chains. Red blood cells.

Functionally, involved in oxygen transport from the lung to the various peripheral tissues. In terms of biological role, hemopressin acts as an antagonist peptide of the cannabinoid receptor CNR1. Hemopressin-binding efficiently blocks cannabinoid receptor CNR1 and subsequent signaling. The chain is Hemoglobin subunit alpha (HBA) from Trichechus inunguis (Amazon manatee).